Reading from the N-terminus, the 436-residue chain is CaM kinase-like vesicle-associated protein (436 aa).

Positions Tyr24 to Ile286 constitute a Protein kinase domain. Residues Ala328 to Gly436 are disordered. A compositionally biased stretch (low complexity) spans Thr333–Val409.

This sequence belongs to the protein kinase superfamily. CAMK Ser/Thr protein kinase family. In terms of assembly, interacts with calmodulin, in the presence of calcium. Ca(2+) is required as a cofactor.

The protein localises to the cytoplasmic vesicle membrane. Does not appear to have detectable kinase activity. In Danio rerio (Zebrafish), this protein is CaM kinase-like vesicle-associated protein (camkv).